A 441-amino-acid chain; its full sequence is uncharacterized protein (441 aa).

78 to 85 contacts ATP; it reads GPRQAGKT.

This is an uncharacterized protein from Mycobacterium bovis (strain ATCC BAA-935 / AF2122/97).